A 159-amino-acid chain; its full sequence is Ribosomal RNA large subunit methyltransferase H (159 aa).

Residues L76, G108, and 127-132 (FGKLTL) each bind S-adenosyl-L-methionine.

The protein belongs to the RNA methyltransferase RlmH family. Homodimer.

It localises to the cytoplasm. The catalysed reaction is pseudouridine(1915) in 23S rRNA + S-adenosyl-L-methionine = N(3)-methylpseudouridine(1915) in 23S rRNA + S-adenosyl-L-homocysteine + H(+). Its function is as follows. Specifically methylates the pseudouridine at position 1915 (m3Psi1915) in 23S rRNA. This is Ribosomal RNA large subunit methyltransferase H from Streptococcus sanguinis (strain SK36).